Reading from the N-terminus, the 454-residue chain is Bifunctional protein GlmU (454 aa).

Positions 1–231 (MSRPTVSLIV…EAETLGVNTR (231 aa)) are pyrophosphorylase. Residues 11–14 (LAAG), Lys-25, Gln-78, 83–84 (GT), 106–108 (YGD), Gly-143, Glu-157, Asn-172, and Asn-229 contribute to the UDP-N-acetyl-alpha-D-glucosamine site. Mg(2+) is bound at residue Asp-108. Asn-229 contributes to the Mg(2+) binding site. Positions 232-252 (AQLAAAEAEFQRRARAAALED) are linker. The N-acetyltransferase stretch occupies residues 253-454 (GVTLTAPDTV…ARDASKKGTN (202 aa)). UDP-N-acetyl-alpha-D-glucosamine contacts are provided by Arg-318 and Lys-336. The active-site Proton acceptor is the His-348. Residues Tyr-351 and Asn-362 each contribute to the UDP-N-acetyl-alpha-D-glucosamine site. Residues Ala-365, 371 to 372 (NY), Ser-390, Ser-408, and Arg-425 contribute to the acetyl-CoA site.

This sequence in the N-terminal section; belongs to the N-acetylglucosamine-1-phosphate uridyltransferase family. In the C-terminal section; belongs to the transferase hexapeptide repeat family. In terms of assembly, homotrimer. Mg(2+) serves as cofactor.

The protein resides in the cytoplasm. It catalyses the reaction alpha-D-glucosamine 1-phosphate + acetyl-CoA = N-acetyl-alpha-D-glucosamine 1-phosphate + CoA + H(+). The catalysed reaction is N-acetyl-alpha-D-glucosamine 1-phosphate + UTP + H(+) = UDP-N-acetyl-alpha-D-glucosamine + diphosphate. It participates in nucleotide-sugar biosynthesis; UDP-N-acetyl-alpha-D-glucosamine biosynthesis; N-acetyl-alpha-D-glucosamine 1-phosphate from alpha-D-glucosamine 6-phosphate (route II): step 2/2. It functions in the pathway nucleotide-sugar biosynthesis; UDP-N-acetyl-alpha-D-glucosamine biosynthesis; UDP-N-acetyl-alpha-D-glucosamine from N-acetyl-alpha-D-glucosamine 1-phosphate: step 1/1. The protein operates within bacterial outer membrane biogenesis; LPS lipid A biosynthesis. Functionally, catalyzes the last two sequential reactions in the de novo biosynthetic pathway for UDP-N-acetylglucosamine (UDP-GlcNAc). The C-terminal domain catalyzes the transfer of acetyl group from acetyl coenzyme A to glucosamine-1-phosphate (GlcN-1-P) to produce N-acetylglucosamine-1-phosphate (GlcNAc-1-P), which is converted into UDP-GlcNAc by the transfer of uridine 5-monophosphate (from uridine 5-triphosphate), a reaction catalyzed by the N-terminal domain. This is Bifunctional protein GlmU from Cereibacter sphaeroides (strain ATCC 17025 / ATH 2.4.3) (Rhodobacter sphaeroides).